The following is a 135-amino-acid chain: ATP synthase epsilon chain (135 aa).

This sequence belongs to the ATPase epsilon chain family. As to quaternary structure, F-type ATPases have 2 components, CF(1) - the catalytic core - and CF(0) - the membrane proton channel. CF(1) has five subunits: alpha(3), beta(3), gamma(1), delta(1), epsilon(1). CF(0) has three main subunits: a, b and c.

The protein resides in the cell inner membrane. Produces ATP from ADP in the presence of a proton gradient across the membrane. The polypeptide is ATP synthase epsilon chain (Hyphomonas neptunium (strain ATCC 15444)).